Consider the following 156-residue polypeptide: Endogenous retrovirus group K member 24 Pro protein (156 aa).

The 76-residue stretch at 21-96 (FEGLVDTGAD…IPLNLWGRDL (76 aa)) folds into the Peptidase A2 domain. The active site involves Asp26. Residues 111-156 (YSPTSQKIMTKMGYIPGKGLGKNEDGIKIPFEAKINQKREGIGYPF) form the G-patch domain.

This sequence belongs to the peptidase A2 family. HERV class-II K(HML-2) subfamily. Active as a homodimer. Post-translationally, autoproteolytically processed at the N-terminus. Expected C-terminal autoprocessing not detected. The sequence shown is that of the processed Pro protein.

The enzyme catalyses Processing at the authentic HIV-1 PR recognition site and release of the mature p17 matrix and the p24 capsid protein, as a result of the cleavage of the -SQNY-|-PIVQ- cleavage site.. Its function is as follows. Retroviral proteases have roles in processing of the primary translation products and the maturation of the viral particle. Endogenous Pro proteins may have kept, lost or modified their original function during evolution. This endogenous protein has retained most of the characteristics of retroviral proteases. This chain is Endogenous retrovirus group K member 24 Pro protein (ERVK-24), found in Homo sapiens (Human).